Here is a 98-residue protein sequence, read N- to C-terminus: NADH-ubiquinone oxidoreductase chain 4L (98 aa).

Helical transmembrane passes span 1-21 (MSMV…GLLM), 29-49 (SLLC…MTIL), and 61-81 (IILL…LVMV).

The protein belongs to the complex I subunit 4L family. Core subunit of respiratory chain NADH dehydrogenase (Complex I) which is composed of 45 different subunits.

It localises to the mitochondrion inner membrane. The catalysed reaction is a ubiquinone + NADH + 5 H(+)(in) = a ubiquinol + NAD(+) + 4 H(+)(out). Its function is as follows. Core subunit of the mitochondrial membrane respiratory chain NADH dehydrogenase (Complex I) which catalyzes electron transfer from NADH through the respiratory chain, using ubiquinone as an electron acceptor. Part of the enzyme membrane arm which is embedded in the lipid bilayer and involved in proton translocation. The chain is NADH-ubiquinone oxidoreductase chain 4L (MT-ND4L) from Otaria byronia (South American sea lion).